A 447-amino-acid polypeptide reads, in one-letter code: Phosphoglucosamine mutase (447 aa).

The active-site Phosphoserine intermediate is serine 100. Mg(2+) contacts are provided by serine 100, aspartate 239, aspartate 241, and aspartate 243. Serine 100 is subject to Phosphoserine.

Belongs to the phosphohexose mutase family. The cofactor is Mg(2+). Activated by phosphorylation.

It catalyses the reaction alpha-D-glucosamine 1-phosphate = D-glucosamine 6-phosphate. Functionally, catalyzes the conversion of glucosamine-6-phosphate to glucosamine-1-phosphate. The protein is Phosphoglucosamine mutase of Halalkalibacterium halodurans (strain ATCC BAA-125 / DSM 18197 / FERM 7344 / JCM 9153 / C-125) (Bacillus halodurans).